A 347-amino-acid polypeptide reads, in one-letter code: GMP reductase (347 aa).

Position 108–131 (108–131) interacts with NADP(+); the sequence is ADFQKTKDIMAISDEFIFICIDIA. Residues Gly181 and Gly183 each coordinate K(+). The Thioimidate intermediate role is filled by Cys186. An NADP(+)-binding site is contributed by 216–239; that stretch reads IIGDGGCSCAGDVAKAFGGGADFV.

This sequence belongs to the IMPDH/GMPR family. GuaC type 1 subfamily. In terms of assembly, homotetramer.

The catalysed reaction is IMP + NH4(+) + NADP(+) = GMP + NADPH + 2 H(+). In terms of biological role, catalyzes the irreversible NADPH-dependent deamination of GMP to IMP. It functions in the conversion of nucleobase, nucleoside and nucleotide derivatives of G to A nucleotides, and in maintaining the intracellular balance of A and G nucleotides. The polypeptide is GMP reductase (Vibrio campbellii (strain ATCC BAA-1116)).